We begin with the raw amino-acid sequence, 194 residues long: MFNQTQLFVFLAVFTTSSVLGNNNDVKDGAASGAHSDRLGLWFGPRLGKRSLRISTEDNRQAFFKLLEAADALKYYYDQLPYEMQADEPETRVTKKVIFTPKLGRSLAYDDKSFENVEFTPRLGRRLSDDMPATPADQEMYRQDPEQIDSRTKYFSPRLGRTMNFSPRLGRELSYDMMPNKIRVVRSTNKTRST.

The N-terminal stretch at 1–23 is a signal peptide; that stretch reads MFNQTQLFVFLAVFTTSSVLGNN. At Leu-47 the chain carries Leucine amide. Positions 51–94 are excised as a propeptide; sequence SLRISTEDNRQAFFKLLEAADALKYYYDQLPYEMQADEPETRVT. Leucine amide occurs at positions 103, 123, 159, and 169. A propeptide spanning residues 172–194 is cleaved from the precursor; it reads ELSYDMMPNKIRVVRSTNKTRST.

This sequence belongs to the pyrokinin family. In terms of tissue distribution, expressed in the subesophageal ganglions. Not found in corpora cardiaca, corpora allata and thoracic ganglia.

The protein localises to the secreted. In terms of biological role, a hormone that controls sex pheromone production in females and pheromone responsiveness in male. Also mediates visceral muscle contractile activity (myotropic activity). The protein is PBAN-type neuropeptides of Helicoverpa zea (Corn earworm moth).